The primary structure comprises 314 residues: Methionyl-tRNA formyltransferase (314 aa).

111-114 contacts (6S)-5,6,7,8-tetrahydrofolate; the sequence is SLLP.

It belongs to the Fmt family.

It catalyses the reaction L-methionyl-tRNA(fMet) + (6R)-10-formyltetrahydrofolate = N-formyl-L-methionyl-tRNA(fMet) + (6S)-5,6,7,8-tetrahydrofolate + H(+). In terms of biological role, attaches a formyl group to the free amino group of methionyl-tRNA(fMet). The formyl group appears to play a dual role in the initiator identity of N-formylmethionyl-tRNA by promoting its recognition by IF2 and preventing the misappropriation of this tRNA by the elongation apparatus. The protein is Methionyl-tRNA formyltransferase of Coxiella burnetii (strain CbuK_Q154) (Coxiella burnetii (strain Q154)).